Here is a 363-residue protein sequence, read N- to C-terminus: Cytochrome b (363 aa).

Transmembrane regions (helical) follow at residues 24–44 (VGFSLGFFIALQIICGVCLAW), 68–90 (FVIRSVHICFTSLLYLLLYIHIF), 105–125 (VWFIGFILFVFIIIIAFIGYV), and 171–191 (LHVLHVLLPFILLIILILHLF). H74 and H88 together coordinate heme b. Residues H175 and H189 each contribute to the heme b site. An a ubiquinone-binding site is contributed by H194. Helical transmembrane passes span 219–239 (FYLRDMFLAFSILLCMMYVIF), 287–307 (FLMVILLFSLFLFILNCILWF), 321–341 (LILFYSIWMSGFLALYVVLAY), and 342–362 (PIWMELQYWVLLLFLLIVCRL).

This sequence belongs to the cytochrome b family. The main subunits of complex b-c1 are: cytochrome b, cytochrome c1 and the Rieske protein. It depends on heme b as a cofactor.

It is found in the mitochondrion inner membrane. Its function is as follows. Component of the ubiquinol-cytochrome c reductase complex (complex III or cytochrome b-c1 complex) that is part of the mitochondrial respiratory chain. The b-c1 complex mediates electron transfer from ubiquinol to cytochrome c. Contributes to the generation of a proton gradient across the mitochondrial membrane that is then used for ATP synthesis. The protein is Cytochrome b (MT-CYB) of Trypanosoma brucei brucei.